Consider the following 402-residue polypeptide: Zinc finger CCHC domain-containing protein 12 (402 aa).

Positions 1–20 (MASILSRLGSSRGQNSPLPP) are disordered. The segment at 346 to 363 (IHCSHCGEEGHSKETCDN) adopts a CCHC-type zinc-finger fold. The segment at 383–402 (HAEERARGAPGEPIGLSEPQ) is disordered.

Belongs to the ZCCHC12 family. As to quaternary structure, interacts with SMAD1 and CREB-binding protein (CBP). Forms a protein-DNA complex through its association with SMAD1. In terms of tissue distribution, in embryonic brains expression is restricted to the ventral region of the forebrain, including the septum, amygdala, caudal putamen, and in the basal-forebrain cholinergic neurons. In adults, expressed in the brain, and at low levels in the testis.

Transcriptional coactivator in the bone morphogenetic protein (BMP)-signaling pathway. It positively modulates BMP signaling by interacting with SMAD1 and associating with CBP in the transcription complex. It contributes to the BMP-induced enhancement of cholinergic-neuron-specific gene expression. This Mus musculus (Mouse) protein is Zinc finger CCHC domain-containing protein 12 (Zcchc12).